The following is a 989-amino-acid chain: Bifunctional glutamine synthetase adenylyltransferase/adenylyl-removing enzyme (989 aa).

An adenylyl removase region spans residues 1-473; the sequence is MRGPLEPDSA…HYANLFEDVA (473 aa). Residues 479–989 form an adenylyl transferase region; that stretch reads DADLMFPPDE…FERILETAAE (511 aa).

This sequence belongs to the GlnE family. Requires Mg(2+) as cofactor.

The enzyme catalyses [glutamine synthetase]-O(4)-(5'-adenylyl)-L-tyrosine + phosphate = [glutamine synthetase]-L-tyrosine + ADP. It carries out the reaction [glutamine synthetase]-L-tyrosine + ATP = [glutamine synthetase]-O(4)-(5'-adenylyl)-L-tyrosine + diphosphate. Its function is as follows. Involved in the regulation of glutamine synthetase GlnA, a key enzyme in the process to assimilate ammonia. When cellular nitrogen levels are high, the C-terminal adenylyl transferase (AT) inactivates GlnA by covalent transfer of an adenylyl group from ATP to specific tyrosine residue of GlnA, thus reducing its activity. Conversely, when nitrogen levels are low, the N-terminal adenylyl removase (AR) activates GlnA by removing the adenylyl group by phosphorolysis, increasing its activity. The regulatory region of GlnE binds the signal transduction protein PII (GlnB) which indicates the nitrogen status of the cell. This Xanthobacter autotrophicus (strain ATCC BAA-1158 / Py2) protein is Bifunctional glutamine synthetase adenylyltransferase/adenylyl-removing enzyme.